We begin with the raw amino-acid sequence, 959 residues long: Isoleucine--tRNA ligase (959 aa).

The 'HIGH' region signature appears at 60-70 (PYANGSLHIGH). Glutamate 571 is a binding site for L-isoleucyl-5'-AMP. The 'KMSKS' region motif lies at 612 to 616 (KMSKS). Lysine 615 lines the ATP pocket. Zn(2+) is bound by residues cysteine 928, cysteine 931, cysteine 948, and cysteine 951.

This sequence belongs to the class-I aminoacyl-tRNA synthetase family. IleS type 1 subfamily. As to quaternary structure, monomer. It depends on Zn(2+) as a cofactor.

It is found in the cytoplasm. The catalysed reaction is tRNA(Ile) + L-isoleucine + ATP = L-isoleucyl-tRNA(Ile) + AMP + diphosphate. Its function is as follows. Catalyzes the attachment of isoleucine to tRNA(Ile). As IleRS can inadvertently accommodate and process structurally similar amino acids such as valine, to avoid such errors it has two additional distinct tRNA(Ile)-dependent editing activities. One activity is designated as 'pretransfer' editing and involves the hydrolysis of activated Val-AMP. The other activity is designated 'posttransfer' editing and involves deacylation of mischarged Val-tRNA(Ile). This chain is Isoleucine--tRNA ligase, found in Nostoc punctiforme (strain ATCC 29133 / PCC 73102).